A 180-amino-acid chain; its full sequence is ATP-dependent protease subunit HslV (180 aa).

T5 is an active-site residue. The Na(+) site is built by G165, C168, and T171.

This sequence belongs to the peptidase T1B family. HslV subfamily. As to quaternary structure, a double ring-shaped homohexamer of HslV is capped on each side by a ring-shaped HslU homohexamer. The assembly of the HslU/HslV complex is dependent on binding of ATP.

It is found in the cytoplasm. It catalyses the reaction ATP-dependent cleavage of peptide bonds with broad specificity.. Allosterically activated by HslU binding. Functionally, protease subunit of a proteasome-like degradation complex believed to be a general protein degrading machinery. The sequence is that of ATP-dependent protease subunit HslV from Helicobacter pylori (strain J99 / ATCC 700824) (Campylobacter pylori J99).